We begin with the raw amino-acid sequence, 1075 residues long: MQPPPRKGNYVKFLKNLHTEQVAKLQLKNQHECDLLEDIRQFTIKRSAVEKSYSESLLKISSQYLNKKIPNIPDIKMEGMEERWNMWSVWRTVLEENEKLARARLAAIEVFQQQIADEAKVLRDYKLAIAKRSLAGIVNVQKELHLSVGDVDKTKKSYFDEEHCAHDVRDKARDIEEKLKKKKGSFFQSITSLQKNSARVTSRKELLEEKSSGARNDYVLSLAAANAHQNRYFTVDLQTTMTTMENYVFERVAEYLMLMGRTELLTCSATQNSFGKIRDQAQQLTREYNLQCCYLFYPVLKQHIQYDFEACDNDPVRKVTAEHESAAETLTKEAKNLAGRVVKENASIRENAKKLALCQSLRDSGQRTDPNDPNGPDLDTKIEEFRDQIRRSETEKTKAEACLQCLRDGGINVDEWVQEAENMGVQELTRSASSISMRTDASGQGENPSSDSFYDSDKEETQAAAQTKPKQEQQLSRDRTFSDSEDEPEVRPSAAAASSAAAASSSMMASSAGGWDDPTEVNWGAGEEEDDKDEPIVPEPKEAIFKCTALYSYTAQNPDELTIVENEQLEVVGEGDGDGWLRARNYRGEEGYVPHNYLDIDQETAGSAFNGTSGNQLRSQISFSSVDYTVDNEDQTVDSMQSPDQVSVIMAPQKRVKSDVEWCIALYDYDATAEDELTFEEGDKIKIITKTAHGVDDGWWEGELDGKFGNFPSLVVEECDEMGEPLSEGGDESPPPTAAPTFALPPAPALPPEYAHELELELTEDMFGSQDTADEDSGYIPNGAAAPSIPPPVLIQEPGMEDDLSDDGQPPPSLPPPQLAKAGGSAPGSGSKVEKGAAAGGANTLNLGMAQIIVTAATPMVEDGADKSFPPVGESDAQPVEPVSKEQPAEVAKKPDIAPKPLAKVAPQSAPAKEGNAGVRPVVSITLTEYPSCDAEDQQSFSEGTDSASVADVPVLQDAEDPFNEKAKGESGDGSGFEANFEANFDANFDDAFAGIGGGGGGGGGGGEQSNELDINGEAAGEAIVSGSAAGDEDIEAPKQVVGGRASIPEELDSNQLAHYHEHEIYYVDYSHGQL.

Residues 11–289 enclose the F-BAR domain; it reads VKFLKNLHTE…QAQQLTREYN (279 aa). Disordered stretches follow at residues 361-381 and 431-536; these read LRDSGQRTDPNDPNGPDLDTK and SASS…DEPI. The span at 431-453 shows a compositional bias: polar residues; it reads SASSISMRTDASGQGENPSSDSF. A compositionally biased stretch (basic and acidic residues) spans 469 to 482; sequence PKQEQQLSRDRTFS. Residues 493 to 512 show a composition bias toward low complexity; the sequence is SAAAASSAAAASSSMMASSA. SH3 domains follow at residues 542-603 and 658-721; these read EAIF…IDQE and SDVE…ECDE. 3 disordered regions span residues 722–747, 769–837, and 864–917; these read MGEPLSEGGDESPPPTAAPTFALPPA, SQDT…EKGA, and GADK…EGNA. 2 stretches are compositionally biased toward pro residues: residues 733–747 and 809–818; these read SPPPTAAPTFALPPA and QPPPSLPPPQ. Low complexity predominate over residues 819-837; the sequence is LAKAGGSAPGSGSKVEKGA. Positions 883 to 897 are enriched in basic and acidic residues; sequence VSKEQPAEVAKKPDI.

Homodimer. Interacts (via SH3 domain 1) with WASp. Interacts (via SH3 domain 1) with shi/dynamin. Interacts (via SH3 domain 2) with Dap160. Interacts (via F-BAR domain) with SH3PX1. Interacts (via SH3 domain 2) with Snx16. Identified in a complex with Syn and Syt1. As to expression, detected in larval body wall muscle. Detected at the neuromuscular junction, on motoneuron axons and axon terminals, at synaptic boutons in the periactive zone surrounding the synapse (at protein level). Detected on motoneuron axons and axon terminals, at synaptic boutons in the periactive zone surrounding the synapse.

It is found in the endomembrane system. The protein resides in the synapse. It localises to the cell projection. Its subcellular location is the axon. The protein localises to the presynaptic cell membrane. It is found in the cytoplasmic vesicle. The protein resides in the secretory vesicle. It localises to the synaptic vesicle. Its subcellular location is the recycling endosome. Functionally, adapter protein that provides a link between vesicular membrane traffic and the actin assembly machinery. Acts together with Cdc42 to stimulate actin nucleation mediated by WASp and the ARP2/3 complex. Binds to membranes enriched in phosphatidylinositol 4,5-bisphosphate and causes local membrane deformation. Required for normal structure and function of synapses at the neuromuscular junction. Plays a role in synaptic vesicle trafficking. Required for the release of a normal number of synaptic vesicles per action potential. This chain is Protein nervous wreck, found in Drosophila melanogaster (Fruit fly).